The following is a 377-amino-acid chain: Ribosomal RNA large subunit methyltransferase G (377 aa).

Belongs to the methyltransferase superfamily. RlmG family.

The protein resides in the cytoplasm. It catalyses the reaction guanosine(1835) in 23S rRNA + S-adenosyl-L-methionine = N(2)-methylguanosine(1835) in 23S rRNA + S-adenosyl-L-homocysteine + H(+). Functionally, specifically methylates the guanine in position 1835 (m2G1835) of 23S rRNA. This is Ribosomal RNA large subunit methyltransferase G from Shewanella sp. (strain MR-4).